Reading from the N-terminus, the 965-residue chain is Argonaute protein wago-4 (965 aa).

The segment at 1-34 (MPALPPVYTPSGAPSSVHAPPAVPPVPVPTQPLR) is disordered. Positions 10–20 (PSGAPSSVHAP) are enriched in low complexity. The span at 21–30 (PAVPPVPVPT) shows a compositional bias: pro residues. A PAZ domain is found at 318–428 (PILDKLKEIT…YPMELLKISS (111 aa)). The Piwi domain maps to 594–924 (TFVFIITDDS…YAKRGRNLWN (331 aa)).

This sequence belongs to the argonaute family. WAGO subfamily. In terms of assembly, interacts with znfx-1; the interaction promotes the transmission of epigenetic information across generations. May interact with mina-1. Expressed in the hermaphrodite germline and in oocytes. Expressed at a low level in the male germline. Not expressed in the soma of hermaphrodites or males.

It localises to the cytoplasm. The protein resides in the perinuclear region. The protein localises to the cytoplasmic granule. In terms of biological role, argonaute protein which is involved in the endogenous small interfering RNA (endo-siRNA) pathway and is required for RNA-mediated gene silencing (RNAi) in the germline. Interacts with secondary 22G-RNAs, which are RNA-dependent RNA polymerase-derived endo-siRNAs, typically 22 nucleotides in length with a 5'guanosine residue. Also interacts with the mRNA targets of 22G-RNAs. Associates with znfx-1 to mediate small RNA-directed transgenerational epigenetic inheritance of both germline- and soma-expressed genes. This Caenorhabditis elegans protein is Argonaute protein wago-4.